Here is a 64-residue protein sequence, read N- to C-terminus: Large ribosomal subunit protein uL29 (64 aa).

This sequence belongs to the universal ribosomal protein uL29 family.

The chain is Large ribosomal subunit protein uL29 from Maridesulfovibrio salexigens (strain ATCC 14822 / DSM 2638 / NCIMB 8403 / VKM B-1763) (Desulfovibrio salexigens).